We begin with the raw amino-acid sequence, 401 residues long: Sulfate adenylyltransferase (401 aa).

This sequence belongs to the sulfate adenylyltransferase family.

The catalysed reaction is sulfate + ATP + H(+) = adenosine 5'-phosphosulfate + diphosphate. It functions in the pathway sulfur metabolism; hydrogen sulfide biosynthesis; sulfite from sulfate: step 1/3. This chain is Sulfate adenylyltransferase, found in Alcanivorax borkumensis (strain ATCC 700651 / DSM 11573 / NCIMB 13689 / SK2).